The following is a 205-amino-acid chain: Putative 3-methyladenine DNA glycosylase (205 aa).

Belongs to the DNA glycosylase MPG family.

This is Putative 3-methyladenine DNA glycosylase from Bacillus cereus (strain AH187).